A 472-amino-acid polypeptide reads, in one-letter code: 3beta,22alpha-dihydroxysteroid 3-dehydrogenase (472 aa).

The helical transmembrane segment at methionine 1 to leucine 21 threads the bilayer. Residue cysteine 418 coordinates heme.

Belongs to the cytochrome P450 family. Heme is required as a cofactor.

The protein resides in the membrane. It carries out the reaction (22S)-22-hydroxycampesterol + reduced [NADPH--hemoprotein reductase] + O2 = (22S)-22-hydroxycampest-4-en-3-one + oxidized [NADPH--hemoprotein reductase] + 2 H2O + H(+). It catalyses the reaction 6-deoxoteasterone + reduced [NADPH--hemoprotein reductase] + O2 = 3-dehydro-6-deoxoteasterone + oxidized [NADPH--hemoprotein reductase] + 2 H2O + H(+). The enzyme catalyses 6-deoxycathasterone + reduced [NADPH--hemoprotein reductase] + O2 = (22S,24R)-22-hydroxy-5alpha-ergostan-3-one + oxidized [NADPH--hemoprotein reductase] + 2 H2O + H(+). The catalysed reaction is (22R,23R)-22,23-dihydroxycampesterol + reduced [NADPH--hemoprotein reductase] + O2 = (22R,23R)-22,23-dihydroxycampest-4-en-3-one + oxidized [NADPH--hemoprotein reductase] + 2 H2O + H(+). Its pathway is plant hormone biosynthesis; brassinosteroid biosynthesis. Catalyzes C3-oxidation steps in brassinosteroids biosynthesis. Converts (22S)-22-hydroxycampesterol (22-OHCR) to (22S,24R)-22-hydroxyergost-4-en-3-one (22-hydroxy-campesta-4-en-3-one, 22-OH-4-en-3-one), 6-deoxocathasterone (6-deoxoCT) to (22S,24R)-22-hydroxy-5alpha-ergostan-3-one (22-hydroxy-campesta-3-one, 22-OH-3-one), (22R,23R)-22,23-dihydroxycampesterol (22,23-diOHCR) to (22R,23R)-22,23-dihydroxy-campest-4-en-3-one (22,23-diOH-4-en-3-one), and 6-deoxoteasterone (6-deoxoTE) to 3-dehydro-6-deoxoteasterone (6-deoxo3DT, 6-deoxo-3-DHT). This Arabidopsis thaliana (Mouse-ear cress) protein is 3beta,22alpha-dihydroxysteroid 3-dehydrogenase.